The chain runs to 553 residues: Putative transport protein KPN78578_40470 (553 aa).

Helical transmembrane passes span 4–24 (IALT…IGNV), 28–48 (GVGF…HFVD), 65–85 (FGLI…FFAS), 95–115 (LFAI…HKLF), and 158–178 (MSYA…MWLV). RCK C-terminal domains are found at residues 192-276 (RFEE…VIGQ) and 279-361 (ATSL…ELGN). Helical transmembrane passes span 371–391 (MLPV…PLFI), 403–425 (AGGP…LYWF), 437–457 (LGIV…FVAT), 464–484 (LSWI…VGVL), 493–513 (YLTL…LAFA), and 532–552 (PLVM…FWGL).

Belongs to the AAE transporter (TC 2.A.81) family. YidE subfamily.

Its subcellular location is the cell membrane. This is Putative transport protein KPN78578_40470 from Klebsiella pneumoniae subsp. pneumoniae (strain ATCC 700721 / MGH 78578).